We begin with the raw amino-acid sequence, 311 residues long: Transcriptional repressor scratch 2 (311 aa).

The interval 1 to 20 (MPRSFLVKKIKADGFQCSGV) is SNAG domain. 2 disordered regions span residues 71–90 (PAYP…PQSS) and 120–156 (RRRA…ATAG). The span at 124–146 (GAGGDAAGAGDAGGGGGGGGGGE) shows a compositional bias: gly residues. C2H2-type zinc fingers lie at residues 161–183 (HACA…KQTH), 192–214 (RKCP…VLTH), 218–240 (HKCG…MRSH), and 246–268 (FGCA…MQTH). A C2H2-type 5; atypical zinc finger spans residues 274-297 (YRCRQCDKSFALKSYLHKHCEAAC).

It belongs to the snail C2H2-type zinc-finger protein family.

It is found in the nucleus. Its function is as follows. May be involved in transcriptional regulation. This Mus musculus (Mouse) protein is Transcriptional repressor scratch 2 (Scrt2).